The primary structure comprises 298 residues: Homoserine kinase (298 aa).

An ATP-binding site is contributed by 85 to 95 (PMGGLGSSAAS).

This sequence belongs to the GHMP kinase family. Homoserine kinase subfamily.

The protein resides in the cytoplasm. It carries out the reaction L-homoserine + ATP = O-phospho-L-homoserine + ADP + H(+). It functions in the pathway amino-acid biosynthesis; L-threonine biosynthesis; L-threonine from L-aspartate: step 4/5. In terms of biological role, catalyzes the ATP-dependent phosphorylation of L-homoserine to L-homoserine phosphate. This Methanopyrus kandleri (strain AV19 / DSM 6324 / JCM 9639 / NBRC 100938) protein is Homoserine kinase.